Here is a 461-residue protein sequence, read N- to C-terminus: Peptidyl-prolyl cis-trans isomerase-like 4 (461 aa).

Positions 1 to 171 (MSVLLETSLG…KDIRIRHTVI (171 aa)) constitute a PPIase cyclophilin-type domain. The RRM domain occupies 248–326 (NVLFVCKLNP…HRIHVDFSQS (79 aa)). Residues 372 to 461 (NYNMVFDKND…DDRYRDRRRR (90 aa)) form a disordered region. 2 stretches are compositionally biased toward basic and acidic residues: residues 378–392 (DKNDNRRSAPRERSY) and 400–461 (NYRD…RRRR).

This sequence belongs to the cyclophilin-type PPIase family. PPIL4 subfamily.

The protein resides in the nucleus. It catalyses the reaction [protein]-peptidylproline (omega=180) = [protein]-peptidylproline (omega=0). PPIases accelerate the folding of proteins. It catalyzes the cis-trans isomerization of proline imidic peptide bonds in oligopeptides. This chain is Peptidyl-prolyl cis-trans isomerase-like 4 (cyp6), found in Emericella nidulans (strain FGSC A4 / ATCC 38163 / CBS 112.46 / NRRL 194 / M139) (Aspergillus nidulans).